The sequence spans 317 residues: Serpentine receptor class delta-46 (317 aa).

7 helical membrane passes run 9 to 29 (FYII…YVII), 42 to 62 (IFLC…LLQA), 91 to 111 (YVLC…TMYV), 129 to 149 (VIIL…YLTI), 185 to 205 (QIVF…MFCL), 239 to 259 (AFLP…ALIT), and 269 to 289 (FVSV…FYTV).

The protein belongs to the nematode receptor-like protein srd family.

It localises to the membrane. The sequence is that of Serpentine receptor class delta-46 (srd-46) from Caenorhabditis elegans.